We begin with the raw amino-acid sequence, 401 residues long: 1-deoxy-D-xylulose 5-phosphate reductoisomerase (401 aa).

NADPH-binding residues include Thr-11, Gly-12, Ser-13, Ile-14, Arg-38, Asn-39, and Asn-125. Lys-126 contributes to the 1-deoxy-D-xylulose 5-phosphate binding site. Glu-127 serves as a coordination point for NADPH. Position 151 (Asp-151) interacts with Mn(2+). 1-deoxy-D-xylulose 5-phosphate-binding residues include Ser-152, Glu-153, Ser-179, and His-202. Glu-153 is a Mn(2+) binding site. Gly-208 contributes to the NADPH binding site. Residues Ser-215, Asn-220, Lys-221, and Glu-224 each coordinate 1-deoxy-D-xylulose 5-phosphate. A Mn(2+)-binding site is contributed by Glu-224.

The protein belongs to the DXR family. It depends on Mg(2+) as a cofactor. Mn(2+) serves as cofactor.

It catalyses the reaction 2-C-methyl-D-erythritol 4-phosphate + NADP(+) = 1-deoxy-D-xylulose 5-phosphate + NADPH + H(+). It participates in isoprenoid biosynthesis; isopentenyl diphosphate biosynthesis via DXP pathway; isopentenyl diphosphate from 1-deoxy-D-xylulose 5-phosphate: step 1/6. In terms of biological role, catalyzes the NADPH-dependent rearrangement and reduction of 1-deoxy-D-xylulose-5-phosphate (DXP) to 2-C-methyl-D-erythritol 4-phosphate (MEP). In Paraburkholderia phytofirmans (strain DSM 17436 / LMG 22146 / PsJN) (Burkholderia phytofirmans), this protein is 1-deoxy-D-xylulose 5-phosphate reductoisomerase.